Here is a 762-residue protein sequence, read N- to C-terminus: Phosphoribosylformylglycinamidine synthase subunit PurL (762 aa).

Residue His-58 is part of the active site. ATP-binding residues include Tyr-61 and Arg-105. Position 107 (Glu-107) interacts with Mg(2+). Residues 108 to 111 (SHNH) and Arg-130 contribute to the substrate site. The active-site Proton acceptor is His-109. Asp-131 is a Mg(2+) binding site. Residue Gln-255 coordinates substrate. A Mg(2+)-binding site is contributed by Asp-283. Substrate is bound at residue 327–329 (ESQ). The ATP site is built by Asn-513 and Gly-550. Asn-551 serves as a coordination point for Mg(2+). Ser-553 lines the substrate pocket.

The protein belongs to the FGAMS family. Monomer. Part of the FGAM synthase complex composed of 1 PurL, 1 PurQ and 2 PurS subunits.

It is found in the cytoplasm. The enzyme catalyses N(2)-formyl-N(1)-(5-phospho-beta-D-ribosyl)glycinamide + L-glutamine + ATP + H2O = 2-formamido-N(1)-(5-O-phospho-beta-D-ribosyl)acetamidine + L-glutamate + ADP + phosphate + H(+). The protein operates within purine metabolism; IMP biosynthesis via de novo pathway; 5-amino-1-(5-phospho-D-ribosyl)imidazole from N(2)-formyl-N(1)-(5-phospho-D-ribosyl)glycinamide: step 1/2. In terms of biological role, part of the phosphoribosylformylglycinamidine synthase complex involved in the purines biosynthetic pathway. Catalyzes the ATP-dependent conversion of formylglycinamide ribonucleotide (FGAR) and glutamine to yield formylglycinamidine ribonucleotide (FGAM) and glutamate. The FGAM synthase complex is composed of three subunits. PurQ produces an ammonia molecule by converting glutamine to glutamate. PurL transfers the ammonia molecule to FGAR to form FGAM in an ATP-dependent manner. PurS interacts with PurQ and PurL and is thought to assist in the transfer of the ammonia molecule from PurQ to PurL. This chain is Phosphoribosylformylglycinamidine synthase subunit PurL, found in Corynebacterium glutamicum (strain R).